A 253-amino-acid chain; its full sequence is MANLLEKFKNRDKSLLFVPFFVSGFPDFDFLEKFLFKNKDKIDILELGVPFSDPVADGPILQEINYRAMVKGVNLNNTLDWLLDSGITKKIDVILLLYFNLIQNKLEEKLKRFKEVGIKGLVIPDLPLEEAEKLIPLFNEHNLDLILFISPTTREERIRKILDIAPSFLYCISVKGVTGERDRLPEEGVAFISRVKKETNKPLVWGFGLGSSYQINSLKGLVDGVIVGSAIGKRLLNNEDIQDYFDELYKATL.

Catalysis depends on proton acceptor residues Glu46 and Asp57.

The protein belongs to the TrpA family. In terms of assembly, tetramer of two alpha and two beta chains.

The enzyme catalyses (1S,2R)-1-C-(indol-3-yl)glycerol 3-phosphate + L-serine = D-glyceraldehyde 3-phosphate + L-tryptophan + H2O. It functions in the pathway amino-acid biosynthesis; L-tryptophan biosynthesis; L-tryptophan from chorismate: step 5/5. The alpha subunit is responsible for the aldol cleavage of indoleglycerol phosphate to indole and glyceraldehyde 3-phosphate. In Dictyoglomus thermophilum (strain ATCC 35947 / DSM 3960 / H-6-12), this protein is Tryptophan synthase alpha chain.